Here is a 236-residue protein sequence, read N- to C-terminus: UPF0502 protein BceJ2315_62050 (236 aa).

This sequence belongs to the UPF0502 family.

The polypeptide is UPF0502 protein BceJ2315_62050 (Burkholderia cenocepacia (strain ATCC BAA-245 / DSM 16553 / LMG 16656 / NCTC 13227 / J2315 / CF5610) (Burkholderia cepacia (strain J2315))).